We begin with the raw amino-acid sequence, 365 residues long: DNA replication and repair protein RecF (365 aa).

30 to 37 (GDNGEGKT) serves as a coordination point for ATP.

The protein belongs to the RecF family.

It is found in the cytoplasm. Functionally, the RecF protein is involved in DNA metabolism; it is required for DNA replication and normal SOS inducibility. RecF binds preferentially to single-stranded, linear DNA. It also seems to bind ATP. The protein is DNA replication and repair protein RecF of Leptospira interrogans serogroup Icterohaemorrhagiae serovar copenhageni (strain Fiocruz L1-130).